The chain runs to 556 residues: Phenylalanine--tRNA ligase beta subunit (556 aa).

A B5 domain is found at 269–345; that stretch reads MEPEEVVYDV…MGYGYERIEP (77 aa). The Mg(2+) site is built by Asp-323, Asp-329, Glu-332, and Glu-333.

It belongs to the phenylalanyl-tRNA synthetase beta subunit family. Type 2 subfamily. In terms of assembly, tetramer of two alpha and two beta subunits. The cofactor is Mg(2+).

The protein localises to the cytoplasm. The enzyme catalyses tRNA(Phe) + L-phenylalanine + ATP = L-phenylalanyl-tRNA(Phe) + AMP + diphosphate + H(+). The protein is Phenylalanine--tRNA ligase beta subunit of Thermofilum pendens (strain DSM 2475 / Hrk 5).